We begin with the raw amino-acid sequence, 3063 residues long: Collagen alpha-1(XII) chain (3063 aa).

Positions 1-23 (MRSRLPPALAALGAALLLSSIEA) are cleaved as a signal peptide. The Fibronectin type-III 1 domain occupies 27–117 (PPSDLNFKII…GQLTIQTGSS (91 aa)). One can recognise a VWFA 1 domain in the interval 140-316 (DLVFLVDGSW…DIQNEIISQV (177 aa)). An O-linked (Xyl...) (chondroitin sulfate) serine glycan is attached at S329. Residues 336–426 (PPSNLIAMEV…SIMEKTQPMK (91 aa)) form the Fibronectin type-III 2 domain. One can recognise a VWFA 2 domain in the interval 440-616 (DIVFLVDGSY…RISFELTQSI (177 aa)). 6 consecutive Fibronectin type-III domains span residues 634 to 722 (PPKD…TEEV), 725 to 816 (APRN…VRGN), 817 to 905 (PRDL…LEER), 907 to 998 (SPQD…LSQD), 999 to 1087 (SKTL…ASRF), and 1089 to 1179 (SPRN…TLSD). N700 is a glycosylation site (N-linked (GlcNAc...) asparagine). An O-linked (Xyl...) (chondroitin sulfate) serine glycan is attached at S798. Residues 799-830 (GPGTPLTGNAATEEVRGNPRDLRVSDPTTSTM) are disordered. Basic and acidic residues predominate over residues 811-822 (EEVRGNPRDLRV). The Cell attachment site motif lies at 862 to 864 (RGD). S889 and S981 each carry an O-linked (Xyl...) (chondroitin sulfate) serine glycan. Residues 1077 to 1099 (RQGSGTTASRFKSPRNLKTSDPT) form a disordered region. Residues 1079 to 1099 (GSGTTASRFKSPRNLKTSDPT) are compositionally biased toward polar residues. In terms of domain architecture, VWFA 3 spans 1199 to 1371 (DIVLLVDGSW…ESLSRIVDDL (173 aa)). Fibronectin type-III domains follow at residues 1387-1476 (APSN…LPVP), 1477-1567 (VVSL…LPLP), 1568-1658 (RPQD…VPAP), 1659-1754 (TNLK…APKS), 1755-1849 (GPRN…TVRN), 1850-1935 (LRVY…LMRG), 1936-2026 (LARN…LPRS), 2027-2117 (GPRN…VGLL), 2118-2206 (PPQN…LYLN), and 2207-2294 (VTDL…TVKP). N1763 carries an N-linked (GlcNAc...) asparagine glycan. An N-linked (GlcNAc...) asparagine glycan is attached at N2206. Positions 2283-2312 (GVSVKEHTTVKPTEAPTEPPTPPPPPTIPP) are disordered. Residues 2299 to 2311 (TEPPTPPPPPTIP) show a composition bias toward pro residues. The 174-residue stretch at 2323–2496 (DIVFLTDASW…ESFEKIEDNL (174 aa)) folds into the VWFA 4 domain. A nonhelical region (NC3) region spans residues 2451 to 2746 (SGFSVFVVGV…NSCTCTQDSV (296 aa)). Residues 2520–2712 (GFKMLEAYNL…IQSFDIVCSP (193 aa)) form the Laminin G-like domain. N-linked (GlcNAc...) asparagine glycosylation is found at N2528 and N2679. Disordered regions lie at residues 2743–2896 (QDSV…GDRG) and 2932–3063 (NDYQ…PGSG). 4 consecutive Collagen-like domains span residues 2747–2798 (GPPG…GPNG), 2802–2852 (PGEQ…AMGP), 2853–2898 (RGPP…RGDI), and 2941–2990 (PGPP…GERG). Residues 2747–2898 (GPPGPPGPAG…KGEKGDRGDI (152 aa)) form a triple-helical region (COL2) with 1 imperfection region. The Cell attachment site motif lies at 2779 to 2781 (RGD). Pro residues predominate over residues 2784 to 2794 (PPGPQGPPGPQ). A compositionally biased stretch (low complexity) spans 2817–2826 (PGLPGRTGTP). Composition is skewed to pro residues over residues 2828–2837 (LPGPPGPMGP) and 2853–2862 (RGPPGPPGSP). Low complexity predominate over residues 2864 to 2874 (SPGVTGPSGKP). The short motif at 2895–2897 (RGD) is the Cell attachment site element. The nonhelical region (NC2) stretch occupies residues 2899-2941 (ASQNMMRAVARQVCEQLISGQMNRFNQMLNQIPNDYQSSRNQP). A compositionally biased stretch (pro residues) spans 2941–2950 (PGPPGPPGPP). The triple-helical region (COL1) with 2 imperfections stretch occupies residues 2942–3044 (GPPGPPGPPG…RGPPGPPGYC (103 aa)). P2944, P2947, P2950, P2959, P2965, P2968, P2971, P2983, P3000, P3003, P3014, P3023, P3026, and P3029 each carry 4-hydroxyproline. Residues 2957–2966 (GEPGPGGRPG) are compositionally biased toward gly residues. Low complexity predominate over residues 3006 to 3020 (QGESRTGPPGSTGSR). The interval 3045–3063 (DSSQCASIPYNGQGYPGSG) is nonhelical region (NC1).

The protein belongs to the fibril-associated collagens with interrupted helices (FACIT) family. As to quaternary structure, trimer of identical chains each containing 190 kDa of non-triple-helical sequences. In terms of processing, the triple-helical tail is stabilized by disulfide bonds at each end. Hydroxylation on proline residues within the sequence motif, GXPG, is most likely to be 4-hydroxy as this fits the requirement for 4-hydroxylation in vertebrates. Post-translationally, isoform 1 O-glycosylation; glycosaminoglycan of chondroitin-sulfate type. In terms of tissue distribution, found in collagen I-containing tissues: both isoform 1 and isoform 2 appear in amnion, chorion, skeletal muscle, small intestine, and in cell culture of dermal fibroblasts, keratinocytes and endothelial cells. Only isoform 2 is found in lung, placenta, kidney and a squamous cell carcinoma cell line. Isoform 1 is also present in the corneal epithelial Bowman's membrane (BM) and the interfibrillar matrix of the corneal stroma, but it is not detected in the limbal BM.

It is found in the secreted. Its subcellular location is the extracellular space. The protein localises to the extracellular matrix. Its function is as follows. Type XII collagen interacts with type I collagen-containing fibrils, the COL1 domain could be associated with the surface of the fibrils, and the COL2 and NC3 domains may be localized in the perifibrillar matrix. This Homo sapiens (Human) protein is Collagen alpha-1(XII) chain (COL12A1).